A 179-amino-acid chain; its full sequence is Large ribosomal subunit protein uL6 (179 aa).

This sequence belongs to the universal ribosomal protein uL6 family. Part of the 50S ribosomal subunit.

Its function is as follows. This protein binds to the 23S rRNA, and is important in its secondary structure. It is located near the subunit interface in the base of the L7/L12 stalk, and near the tRNA binding site of the peptidyltransferase center. The protein is Large ribosomal subunit protein uL6 of Rhodococcus erythropolis (strain PR4 / NBRC 100887).